The chain runs to 259 residues: Thiazole synthase (259 aa).

Lys-100 (schiff-base intermediate with DXP) is an active-site residue. 1-deoxy-D-xylulose 5-phosphate contacts are provided by residues Gly-161, 187-188, and 209-210; these read AG and NT.

This sequence belongs to the ThiG family. In terms of assembly, homotetramer. Forms heterodimers with either ThiH or ThiS.

Its subcellular location is the cytoplasm. It carries out the reaction [ThiS sulfur-carrier protein]-C-terminal-Gly-aminoethanethioate + 2-iminoacetate + 1-deoxy-D-xylulose 5-phosphate = [ThiS sulfur-carrier protein]-C-terminal Gly-Gly + 2-[(2R,5Z)-2-carboxy-4-methylthiazol-5(2H)-ylidene]ethyl phosphate + 2 H2O + H(+). The protein operates within cofactor biosynthesis; thiamine diphosphate biosynthesis. Its function is as follows. Catalyzes the rearrangement of 1-deoxy-D-xylulose 5-phosphate (DXP) to produce the thiazole phosphate moiety of thiamine. Sulfur is provided by the thiocarboxylate moiety of the carrier protein ThiS. In vitro, sulfur can be provided by H(2)S. This is Thiazole synthase from Halalkalibacterium halodurans (strain ATCC BAA-125 / DSM 18197 / FERM 7344 / JCM 9153 / C-125) (Bacillus halodurans).